The sequence spans 403 residues: Phosphoglycerate kinase (403 aa).

Residues 22–24 (DLN), arginine 37, 60–63 (HLGN), arginine 119, and arginine 152 each bind substrate. ATP-binding positions include lysine 202, glutamate 325, and 355–358 (GGDT).

This sequence belongs to the phosphoglycerate kinase family. In terms of assembly, monomer.

It localises to the cytoplasm. The catalysed reaction is (2R)-3-phosphoglycerate + ATP = (2R)-3-phospho-glyceroyl phosphate + ADP. The protein operates within carbohydrate degradation; glycolysis; pyruvate from D-glyceraldehyde 3-phosphate: step 2/5. The polypeptide is Phosphoglycerate kinase (Orientia tsutsugamushi (strain Boryong) (Rickettsia tsutsugamushi)).